We begin with the raw amino-acid sequence, 82 residues long: Small ribosomal subunit protein bS16 (82 aa).

This sequence belongs to the bacterial ribosomal protein bS16 family.

This is Small ribosomal subunit protein bS16 from Dehalococcoides mccartyi (strain ATCC BAA-2266 / KCTC 15142 / 195) (Dehalococcoides ethenogenes (strain 195)).